A 120-amino-acid polypeptide reads, in one-letter code: Large ribosomal subunit protein bL17 (120 aa).

This sequence belongs to the bacterial ribosomal protein bL17 family. In terms of assembly, part of the 50S ribosomal subunit. Contacts protein L32.

This is Large ribosomal subunit protein bL17 from Geobacillus sp. (strain WCH70).